A 533-amino-acid chain; its full sequence is Retinoid isomerohydrolase (533 aa).

Ser2 is subject to N-acetylserine. Thr101 and Thr105 each carry phosphothreonine. Cys112 carries S-palmitoyl cysteine; in membrane form lipidation. N6-acetyllysine is present on Lys113. Ser117 bears the Phosphoserine mark. Residue His180 coordinates Fe cation. Residue Cys231 is the site of S-palmitoyl cysteine; in membrane form attachment. Residues His241 and His313 each coordinate Fe cation. 2 S-palmitoyl cysteine; in membrane form lipidation sites follow: Cys329 and Cys330. His527 serves as a coordination point for Fe cation.

It belongs to the carotenoid oxygenase family. As to quaternary structure, interacts with MYO7A; this mediates light-dependent intracellular transport of RPE65. Fe(2+) is required as a cofactor. Palmitoylation by LRAT regulates ligand binding specificity; the palmitoylated form (membrane form) specifically binds all-trans-retinyl-palmitate, while the soluble unpalmitoylated form binds all-trans-retinol (vitamin A). Retinal pigment epithelium specific.

It localises to the cytoplasm. Its subcellular location is the cell membrane. It is found in the microsome membrane. The catalysed reaction is an all-trans-retinyl ester + H2O = 11-cis-retinol + a fatty acid + H(+). It catalyses the reaction lutein = (3R,3'S)-zeaxanthin. It carries out the reaction all-trans-retinyl hexadecanoate + H2O = 11-cis-retinol + hexadecanoate + H(+). In terms of biological role, critical isomerohydrolase in the retinoid cycle involved in regeneration of 11-cis-retinal, the chromophore of rod and cone opsins. Catalyzes the cleavage and isomerization of all-trans-retinyl fatty acid esters to 11-cis-retinol which is further oxidized by 11-cis retinol dehydrogenase to 11-cis-retinal for use as visual chromophore. Essential for the production of 11-cis retinal for both rod and cone photoreceptors. Also capable of catalyzing the isomerization of lutein to meso-zeaxanthin an eye-specific carotenoid. The soluble form binds vitamin A (all-trans-retinol), making it available for LRAT processing to all-trans-retinyl ester. The membrane form, palmitoylated by LRAT, binds all-trans-retinyl esters, making them available for IMH (isomerohydrolase) processing to all-cis-retinol. The soluble form is regenerated by transferring its palmitoyl groups onto 11-cis-retinol, a reaction catalyzed by LRAT. The polypeptide is Retinoid isomerohydrolase (RPE65) (Canis lupus familiaris (Dog)).